A 359-amino-acid polypeptide reads, in one-letter code: Guanine nucleotide-binding protein-like alpha-11 subunit (359 aa).

Gly-2 carries N-myristoyl glycine lipidation. The 331-residue stretch at 29 to 359 folds into the G-alpha domain; the sequence is KLIKILMMGN…YVKKILEDTI (331 aa). The segment at 32-45 is G1 motif; sequence KILMMGNENSAKST. A Mg(2+)-binding site is contributed by Ser-44. The segment at 176–185 is G2 motif; sequence DIIRCSKNNQ. GTP-binding positions include 178–185, 204–208, and 281–284; these read IRCSKNNQ, DTGNQ, and NKKE. The tract at residues 200–209 is G3 motif; sequence FVFVDTGNQK. The interval 277–284 is G4 motif; it reads IVLFNKKE. The interval 337–342 is G5 motif; the sequence is FNSSDT.

This sequence belongs to the G-alpha family.

This Dictyostelium discoideum (Social amoeba) protein is Guanine nucleotide-binding protein-like alpha-11 subunit (gpaK).